A 228-amino-acid chain; its full sequence is 2,3-bisphosphoglycerate-dependent phosphoglycerate mutase (228 aa).

Residues 8-15, 21-22, Arg-60, 87-90, Lys-98, 114-115, and 183-184 each bind substrate; these read RHGQSEWN, TG, ERHY, RR, and GN. The active-site Tele-phosphohistidine intermediate is His-9. Glu-87 (proton donor/acceptor) is an active-site residue.

Belongs to the phosphoglycerate mutase family. BPG-dependent PGAM subfamily.

The enzyme catalyses (2R)-2-phosphoglycerate = (2R)-3-phosphoglycerate. It participates in carbohydrate degradation; glycolysis; pyruvate from D-glyceraldehyde 3-phosphate: step 3/5. Its function is as follows. Catalyzes the interconversion of 2-phosphoglycerate and 3-phosphoglycerate. This is 2,3-bisphosphoglycerate-dependent phosphoglycerate mutase from Staphylococcus epidermidis (strain ATCC 35984 / DSM 28319 / BCRC 17069 / CCUG 31568 / BM 3577 / RP62A).